A 143-amino-acid chain; its full sequence is Nucleoside diphosphate kinase (143 aa).

ATP contacts are provided by Lys11, Phe59, Arg87, Thr93, Arg104, and Asn114. The active-site Pros-phosphohistidine intermediate is the His117.

The protein belongs to the NDK family. In terms of assembly, homotetramer. Mg(2+) is required as a cofactor.

The protein localises to the cytoplasm. It carries out the reaction a 2'-deoxyribonucleoside 5'-diphosphate + ATP = a 2'-deoxyribonucleoside 5'-triphosphate + ADP. The catalysed reaction is a ribonucleoside 5'-diphosphate + ATP = a ribonucleoside 5'-triphosphate + ADP. Its function is as follows. Major role in the synthesis of nucleoside triphosphates other than ATP. The ATP gamma phosphate is transferred to the NDP beta phosphate via a ping-pong mechanism, using a phosphorylated active-site intermediate. The polypeptide is Nucleoside diphosphate kinase (Shewanella sp. (strain W3-18-1)).